The primary structure comprises 467 residues: MNTVRSEKDSMGAIDVPADKLWGAQTQRSLEHFRISTEKMPTSLIHALALTKRAAAKVNEDLGLLSEEKASAIRQAADEVLAGQHDDEFPLAIWQTGSGTQSNMNMNEVLANRASELLGGVRGMERKVHPNDDVNKSQSSNDVFPTAMHVAALLALRKQLIPQLKTLTQTLNEKSRAFADIVKIGRTHLQDATPLTLGQEISGWVAMLEHNLKHIEYSLPHVAELALGGTAVGTGLNTHPEYARRVADELAVITCAPFVTAPNKFEALATCDALVQAHGALKGLAASLMKIANDVRWLASGPRCGIGEISIPENEPGSSIMPGKVNPTQCEALTMLCCQVMGNDVAINMGGASGNFELNVFRPMVIHNFLQSVRLLADGMESFNKHCAVGIEPNRERINQLLNESLMLVTALNTHIGYDKAAEIAKKAHKEGLTLKAAALALGYLSEAEFDSWVRPEQMVGSMKAGR.

Substrate contacts are provided by residues 98 to 100 (SGT), Arg-126, 129 to 132 (HPND), 139 to 141 (SSN), and Thr-187. The active-site Proton donor/acceptor is the His-188. Ser-318 is an active-site residue. Residues Ser-319 and 324 to 326 (KVN) contribute to the substrate site.

This sequence belongs to the class-II fumarase/aspartase family. Fumarase subfamily. In terms of assembly, homotetramer.

The protein localises to the cytoplasm. It catalyses the reaction (S)-malate = fumarate + H2O. The protein operates within carbohydrate metabolism; tricarboxylic acid cycle; (S)-malate from fumarate: step 1/1. With respect to regulation, inhibited by ATP, citrate and S-2,3-dicarboxyaziridine. Functionally, involved in the TCA cycle. FumC seems to be a backup enzyme for FumA under conditions of iron limitation and oxidative stress. Catalyzes the stereospecific interconversion of fumarate to L-malate. This Escherichia coli (strain K12) protein is Fumarate hydratase class II.